Reading from the N-terminus, the 465-residue chain is 3-isopropylmalate dehydratase large subunit (465 aa).

Residues C347, C407, and C410 each coordinate [4Fe-4S] cluster.

Belongs to the aconitase/IPM isomerase family. LeuC type 1 subfamily. As to quaternary structure, heterodimer of LeuC and LeuD. [4Fe-4S] cluster serves as cofactor.

It carries out the reaction (2R,3S)-3-isopropylmalate = (2S)-2-isopropylmalate. It participates in amino-acid biosynthesis; L-leucine biosynthesis; L-leucine from 3-methyl-2-oxobutanoate: step 2/4. Its function is as follows. Catalyzes the isomerization between 2-isopropylmalate and 3-isopropylmalate, via the formation of 2-isopropylmaleate. The sequence is that of 3-isopropylmalate dehydratase large subunit from Aeromonas hydrophila subsp. hydrophila (strain ATCC 7966 / DSM 30187 / BCRC 13018 / CCUG 14551 / JCM 1027 / KCTC 2358 / NCIMB 9240 / NCTC 8049).